We begin with the raw amino-acid sequence, 493 residues long: Lysine--tRNA ligase (493 aa).

Positions 400 and 407 each coordinate Mg(2+).

The protein belongs to the class-II aminoacyl-tRNA synthetase family. As to quaternary structure, homodimer. Mg(2+) is required as a cofactor.

It is found in the cytoplasm. The enzyme catalyses tRNA(Lys) + L-lysine + ATP = L-lysyl-tRNA(Lys) + AMP + diphosphate. This is Lysine--tRNA ligase from Syntrophomonas wolfei subsp. wolfei (strain DSM 2245B / Goettingen).